A 247-amino-acid chain; its full sequence is Small ribosomal subunit protein uS2 (247 aa).

It belongs to the universal ribosomal protein uS2 family.

The polypeptide is Small ribosomal subunit protein uS2 (Pseudomonas savastanoi pv. phaseolicola (strain 1448A / Race 6) (Pseudomonas syringae pv. phaseolicola (strain 1448A / Race 6))).